The sequence spans 119 residues: Anamorsin homolog (119 aa).

The span at 1–15 (MSSSATSTQAFSLKT) shows a compositional bias: polar residues. Disordered stretches follow at residues 1–21 (MSSSATSTQAFSLKTRQPIPD) and 33–119 (LKQA…TDDV). Positions 42, 49, 52, and 54 each coordinate [2Fe-2S] cluster. Residues 42–54 (CTTRRRACKNCVC) form a fe-S binding site A region. 4 residues coordinate [4Fe-4S] cluster: cysteine 81, cysteine 84, cysteine 92, and cysteine 95. 2 short sequence motifs (cx2C motif) span residues 81–84 (CGNC) and 92–95 (CANC). Positions 81-95 (CGNCSKGDAFRCANC) are fe-S binding site B.

It belongs to the anamorsin family. In terms of assembly, monomer. Requires [2Fe-2S] cluster as cofactor. [4Fe-4S] cluster is required as a cofactor.

The protein localises to the cytoplasm. The protein resides in the mitochondrion intermembrane space. Component of the cytosolic iron-sulfur (Fe-S) protein assembly (CIA) machinery. Required for the maturation of extramitochondrial Fe-S proteins. Part of an electron transfer chain functioning in an early step of cytosolic Fe-S biogenesis, facilitating the de novo assembly of a [4Fe-4S] cluster on the cytosolic Fe-S scaffold complex. Electrons are transferred from NADPH via a FAD- and FMN-containing diflavin oxidoreductase. Together with the diflavin oxidoreductase, also required for the assembly of the diferric tyrosyl radical cofactor of ribonucleotide reductase (RNR), probably by providing electrons for reduction during radical cofactor maturation in the catalytic small subunit. The chain is Anamorsin homolog from Leishmania infantum.